Reading from the N-terminus, the 496-residue chain is Beta-amylase (496 aa).

Residues D54, H94, and D102 each coordinate substrate. The active-site Proton donor is the E187. Substrate-binding residues include K296, H301, and T343. E381 serves as the catalytic Proton acceptor. Substrate is bound by residues 382–383 and R421; that span reads NA.

It belongs to the glycosyl hydrolase 14 family.

It catalyses the reaction Hydrolysis of (1-&gt;4)-alpha-D-glucosidic linkages in polysaccharides so as to remove successive maltose units from the non-reducing ends of the chains.. The polypeptide is Beta-amylase (BMY1) (Trifolium repens (Creeping white clover)).